Here is a 214-residue protein sequence, read N- to C-terminus: Outer membrane lipoprotein MapA (214 aa).

Residues 1 to 17 form the signal peptide; that stretch reads MFKKFLIFIVPILFLSA. C18 is lipidated: N-palmitoyl cysteine. C18 carries S-diacylglycerol cysteine lipidation.

The protein resides in the cell outer membrane. This chain is Outer membrane lipoprotein MapA (mapA), found in Campylobacter jejuni subsp. jejuni serotype O:6 (strain 81116 / NCTC 11828).